Reading from the N-terminus, the 625-residue chain is LGDVSEASGARWVAQSVSPSPDRFGLFGAPPLSEGYVVLLGDERSKPSPPPSEFLLSVFRRNRAARLVCLSIVLSFVCSLLFWTASKNMGQTVTTPLSLTLEHWEDVQRIASNQSVDVKKRRWVTFCSAEWPTFGVGWPQDGTFNLDIILQVKSKVFSPGPHGHPDQVPYIVTWEAIAYEPPPWVKPFVSPKLSPSPTAPILPSGPSTQPPPRSALYPALTPSIKPRPSKPQVLSDNGGPLIDLLSEDPPPYGGQGLSSSDGDGDREEATSTSEIPAPSPIVSRLRGKRDPPAADSTTSRAFPLRLGGNGQLQYWPFSSSDLYNWKNNNPSFSEDPGKLTALIESVLTTHQPTWDDCQQLLGTLLTGEEKQRVLLEARKAVRGNDGRPTQLPNEVDAAFPLERPDWDYTTQRGRNHLVLYRQLLLAGLQNAGRSPTNLAKVKGITQGPNESPSAFLERLKEAYRRYTPYDPEDPGQETNVSMSFIWQSAPDIGRKLERLEDLKSKTLGDLVREAERIFNKRETPEEREERVRRETEEKEERRRAEEEQKEKERDRRRHREMSKLLATVVSGQRQDRQGGERRRPQLDKDQCAYCKEKGHWAKDCPKKPRGPRGPRPQTSLLTLDD.

The Cytoplasmic segment spans residues 1-66; it reads LGDVSEASGA…SVFRRNRAAR (66 aa). Residues 67 to 86 traverse the membrane as a helical segment; sequence LVCLSIVLSFVCSLLFWTAS. The Extracellular segment spans residues 87-625; sequence KNMGQTVTTP…PQTSLLTLDD (539 aa). Asparagine 113 carries an N-linked (GlcNAc...) asparagine; by host glycan. Positions 195 to 305 are disordered; it reads PSPTAPILPS…STTSRAFPLR (111 aa). N-linked (GlcNAc...) asparagine; by host glycosylation is present at asparagine 479. Composition is skewed to basic and acidic residues over residues 522–553 and 573–606; these read ETPEEREERVRRETEEKEERRRAEEEQKEKER and RQDRQGGERRRPQLDKDQCAYCKEKGHWAKDCPK. The tract at residues 522 to 625 is disordered; that stretch reads ETPEEREERV…PQTSLLTLDD (104 aa).

Glycosylated by host. In terms of processing, cleaved by host near the middle of the molecule, releasing the c-terminal half containing capsid and nucleoprotein domains op GAG.

It localises to the host cell membrane. Functionally, plays a role in viral particle release. Presumably acts by facilitating the fission of the virion bud at the cell surface. May prevent the antiviral activity of murine APOBEC3. The sequence is that of Glyco-Gag protein from AKV murine leukemia virus (AKR (endogenous) murine leukemia virus).